Here is a 384-residue protein sequence, read N- to C-terminus: uncharacterized protein (384 aa).

12 helical membrane passes run 22-42 (LAFFIAGLGMAAWAPLVPFAK), 52-72 (LGLLLLCIGIGSMLAMPLTGV), 81-101 (AVILLAGAVLCLDLPLLVLMN), 106-126 (MAIALLVFGAAMGIIDVAMNI), 143-163 (FHGLFSVGGIVGAGGVSALLW), 164-184 (LGLNPLTAIMATVVLMIILLL), 202-222 (LFVFPRGWVMFIGFLCFVMFL), 240-260 (GMSPSQAGMGYAVFAIAMTLG), 276-296 (VLLGGSLCSAIGIIIAISIDS), 299-319 (AAIIGFMLVGFGASNVVPILF), 327-347 (VMPANLAVASITTIGYAGILA), and 352-372 (IGFIAQLSSLSVAFGCVALLL).

Belongs to the major facilitator superfamily.

It localises to the membrane. This is an uncharacterized protein from Yersinia pestis.